Here is a 1165-residue protein sequence, read N- to C-terminus: Leptin receptor (1165 aa).

The signal sequence occupies residues 1–21; the sequence is MICQKFCVVLLHWEFIYVITA. Over 22–839 the chain is Extracellular; that stretch reads FNLSYPITPW…QDDIEKHQSD (818 aa). 6 N-linked (GlcNAc...) asparagine glycosylation sites follow: N23, N41, N56, N73, N81, and N98. 5 disulfide bridges follow: C37–C90, C89–C99, C131–C142, C186–C196, and C188–C193. An N-linked (GlcNAc...) asparagine glycan is attached at N187. N206, N276, N347, and N397 each carry an N-linked (GlcNAc...) asparagine glycan. The Fibronectin type-III 1 domain maps to 239-333; it reads PPLGLHMEIT…TPRVFTTQDV (95 aa). One can recognise an Ig-like domain in the interval 331–429; it reads QDVIYFPPKI…HRYAELYVID (99 aa). Disulfide bonds link C352-C412, C413-C418, C436-C447, C473-C528, and C488-C498. A leptin-binding region spans residues 467–484; the sequence is HRSSLYCSDIPSIHPISE. N-linked (GlcNAc...) asparagine glycans are attached at residues N516, N624, N659, N688, N697, N728, and N750. 3 consecutive Fibronectin type-III domains span residues 539-634, 639-732, and 740-833; these read PPSS…TVVM, PMRG…LTFS, and IVQS…QDDI. The WSXWS motif motif lies at 622 to 626; sequence WSNWS. The helical transmembrane segment at 840-862 threads the bilayer; that stretch reads AGLYVIVPVIISSSILLLGTLLI. The Cytoplasmic portion of the chain corresponds to 863–1165; that stretch reads SHQRMKKLFW…MENKMCDLTV (303 aa). The Box 1 motif motif lies at 871 to 879; it reads FWEDVPNPK. S882 carries the post-translational modification Phosphoserine. Positions 893-898 are required for JAK2 activation; sequence ETFEHL. Residues 898–906 are required for STAT3 phosphorylation; the sequence is LFIKHTASV. A Phosphotyrosine; by JAK2 modification is found at Y986. Y1079 bears the Phosphotyrosine mark. Residue Y1141 is modified to Phosphotyrosine; by JAK2.

It belongs to the type I cytokine receptor family. Type 2 subfamily. In terms of assembly, present as a mixture of monomers and dimers. The phosphorylated receptor binds a number of SH2 domain-containing proteins such as JAK2, STAT3, PTPN11, and SOCS3. Interaction with SOCS3 inhibits JAK/STAT signaling and MAPK cascade. Post-translationally, on ligand binding, phosphorylated on two conserved C-terminal tyrosine residues (isoform B only) by JAK2. Tyr-986 is required for complete binding and activation of PTPN11, ERK/FOS activation,for interaction with SOCS3 and SOCS3 mediated inhibition of leptin signaling. Phosphorylation on Tyr-1141 is required for STAT3 binding/activation. Phosphorylation of Tyr-1079 has a more accessory role. In terms of tissue distribution, isoform A is expressed in fetal liver and in hematopoietic tissues and choroid plexus. In adults highest expression in heart, liver, small intestine, prostate and ovary. Low level in lung and kidney. Isoform B is highly expressed in hypothalamus, but also in skeletal muscle. Detected in fundic and antral epithelial cells of the gastric mucosa. Isoform B and isoform A are expressed by NK cells (at protein level).

It localises to the cell membrane. Its subcellular location is the basolateral cell membrane. The protein localises to the secreted. Functionally, receptor for hormone LEP/leptin. On ligand binding, mediates LEP central and peripheral effects through the activation of different signaling pathways such as JAK2/STAT3 and MAPK cascade/FOS. In the hypothalamus, LEP acts as an appetite-regulating factor that induces a decrease in food intake and an increase in energy consumption by inducing anorexinogenic factors and suppressing orexigenic neuropeptides, also regulates bone mass and secretion of hypothalamo-pituitary-adrenal hormones. In the periphery, increases basal metabolism, influences reproductive function, regulates pancreatic beta-cell function and insulin secretion, is pro-angiogenic and affects innate and adaptive immunity. Control of energy homeostasis and melanocortin production (stimulation of POMC and full repression of AgRP transcription) is mediated by STAT3 signaling, whereas distinct signals regulate NPY and the control of fertility, growth and glucose homeostasis. Involved in the regulation of counter-regulatory response to hypoglycemia by inhibiting neurons of the parabrachial nucleus. Has a specific effect on T lymphocyte responses, differentially regulating the proliferation of naive and memory T -ells. Leptin increases Th1 and suppresses Th2 cytokine production. Its function is as follows. May transport LEP across the blood-brain barrier. Binds LEP and mediates LEP endocytosis. Does not induce phosphorylation of and activate STAT3. Antagonizes Isoform A and isoform B-mediated LEP binding and endocytosis. The chain is Leptin receptor (LEPR) from Homo sapiens (Human).